The chain runs to 385 residues: Linearmycin resistance permease protein LnrN (385 aa).

6 consecutive transmembrane segments (helical) span residues 22–42, 198–218, 239–259, 274–294, 305–325, and 360–380; these read YLIM…MLSG, AAGF…GTIL, IGAG…GILL, AAVI…GLMI, LAFG…YWPI, and DILG…AAGL. An ABC transmembrane type-2 domain is found at 163 to 382; sequence KTVFAKKHED…AITFAAGLKA (220 aa).

This sequence belongs to the ABC-2 integral membrane protein family. In terms of assembly, the complex is composed of two ATP-binding proteins (LnrL) and two transmembrane proteins (LnrM and LnrN).

The protein localises to the cell membrane. In terms of biological role, required for resistance to linearmycins, a family of antibiotic-specialized metabolites produced by some streptomycetes. Part of the ABC transporter complex LnrLMN that probably facilitates linearmycin removal from the membrane. Responsible for the translocation of the substrate across the membrane. Also mediates KinC-dependent biofilm morphology. This Bacillus subtilis (strain 168) protein is Linearmycin resistance permease protein LnrN.